The sequence spans 186 residues: Signal peptidase I (186 aa).

Residues 1–19 (MTEEKSTNKKNSLFEWVKA) lie on the Cytoplasmic side of the membrane. Residues 20–40 (IIIAVVLALLIRAFLFEPYLV) traverse the membrane as a helical segment. Over 41–186 (EGTSMDPTLH…FPFNEIRKTD (146 aa)) the chain is Extracellular. Residues serine 44 and lysine 86 contribute to the active site.

Belongs to the peptidase S26 family.

The protein localises to the cell membrane. It carries out the reaction Cleavage of hydrophobic, N-terminal signal or leader sequences from secreted and periplasmic proteins.. The protein is Signal peptidase I (lepB) of Bacillus licheniformis.